The sequence spans 154 residues: Putative pre-16S rRNA nuclease (154 aa).

It belongs to the YqgF nuclease family.

Its subcellular location is the cytoplasm. Its function is as follows. Could be a nuclease involved in processing of the 5'-end of pre-16S rRNA. The sequence is that of Putative pre-16S rRNA nuclease from Rickettsia felis (strain ATCC VR-1525 / URRWXCal2) (Rickettsia azadi).